Here is a 212-residue protein sequence, read N- to C-terminus: Uridine kinase (212 aa).

13–20 (GASASGKS) contributes to the ATP binding site.

This sequence belongs to the uridine kinase family.

It localises to the cytoplasm. It carries out the reaction uridine + ATP = UMP + ADP + H(+). The enzyme catalyses cytidine + ATP = CMP + ADP + H(+). It functions in the pathway pyrimidine metabolism; CTP biosynthesis via salvage pathway; CTP from cytidine: step 1/3. It participates in pyrimidine metabolism; UMP biosynthesis via salvage pathway; UMP from uridine: step 1/1. This is Uridine kinase from Shewanella halifaxensis (strain HAW-EB4).